The sequence spans 275 residues: COP9 signalosome complex subunit 7a (275 aa).

Serine 2 carries the post-translational modification N-acetylserine. The PCI domain maps to 2-159 (SAEVKVTGQN…QRLEVDYSIG (158 aa)). A coiled-coil region spans residues 185–233 (LSGIEEQVSRANQHKEQQLGLKQQIESEVANLKKTIKVTTAAAAAATSQ). The segment at 228–275 (AAATSQDPEQHLTELREPASGTNQRQPSKKASKGKGLRGSAKIWSKSN) is disordered. A compositionally biased stretch (basic and acidic residues) spans 235-244 (PEQHLTELRE). Over residues 254-263 (PSKKASKGKG) the composition is skewed to basic residues.

The protein belongs to the CSN7/EIF3M family. CSN7 subfamily. As to quaternary structure, component of the CSN complex, composed of COPS1/GPS1, COPS2, COPS3, COPS4, COPS5, COPS6, COPS7 (COPS7A or COPS7B), COPS8 and COPS9. In the complex, it probably interacts directly with COPS1, COPS2, COPS4, COPS5, COPS6 and COPS8. Interacts with PMF1. Interacts with the translation initiation factor EIF3S6. Interacts with CK2 and PKD. Interacts directly with ID3. In terms of processing, phosphorylated by CK2 and PKD kinases.

It localises to the cytoplasm. It is found in the nucleus. Functionally, component of the COP9 signalosome complex (CSN), a complex involved in various cellular and developmental processes. The CSN complex is an essential regulator of the ubiquitin (Ubl) conjugation pathway by mediating the deneddylation of the cullin subunits of SCF-type E3 ligase complexes, leading to decrease the Ubl ligase activity of SCF-type complexes such as SCF, CSA or DDB2. The complex is also involved in phosphorylation of p53/TP53, JUN, I-kappa-B-alpha/NFKBIA, ITPK1 and IRF8/ICSBP, possibly via its association with CK2 and PKD kinases. CSN-dependent phosphorylation of TP53 and JUN promotes and protects degradation by the Ubl system, respectively. This is COP9 signalosome complex subunit 7a (Cops7a) from Mus musculus (Mouse).